Consider the following 500-residue polypeptide: Protein nucleotidyltransferase YdiU (500 aa).

Residues Gly96, Gly98, Arg99, Lys119, Asp131, Gly132, Arg182, and Arg189 each contribute to the ATP site. Asp258 serves as the catalytic Proton acceptor. Residues Asn259 and Asp268 each contribute to the Mg(2+) site. Asp268 is an ATP binding site.

The protein belongs to the SELO family. The cofactor is Mg(2+). Mn(2+) is required as a cofactor.

It carries out the reaction L-seryl-[protein] + ATP = 3-O-(5'-adenylyl)-L-seryl-[protein] + diphosphate. The catalysed reaction is L-threonyl-[protein] + ATP = 3-O-(5'-adenylyl)-L-threonyl-[protein] + diphosphate. It catalyses the reaction L-tyrosyl-[protein] + ATP = O-(5'-adenylyl)-L-tyrosyl-[protein] + diphosphate. The enzyme catalyses L-histidyl-[protein] + UTP = N(tele)-(5'-uridylyl)-L-histidyl-[protein] + diphosphate. It carries out the reaction L-seryl-[protein] + UTP = O-(5'-uridylyl)-L-seryl-[protein] + diphosphate. The catalysed reaction is L-tyrosyl-[protein] + UTP = O-(5'-uridylyl)-L-tyrosyl-[protein] + diphosphate. Its function is as follows. Nucleotidyltransferase involved in the post-translational modification of proteins. It can catalyze the addition of adenosine monophosphate (AMP) or uridine monophosphate (UMP) to a protein, resulting in modifications known as AMPylation and UMPylation. This is Protein nucleotidyltransferase YdiU from Rhizobium etli (strain ATCC 51251 / DSM 11541 / JCM 21823 / NBRC 15573 / CFN 42).